Consider the following 114-residue polypeptide: DNA-binding protein rrnAC3180 (114 aa).

The segment covering 1–11 (MSGDPSEEELE) has biased composition (acidic residues). A disordered region spans residues 1 to 45 (MSGDPSEEELEELRKKKMEQLKEQQGGEGEGQEAAQQQAEAQKQA). Over residues 12 to 22 (ELRKKKMEQLK) the composition is skewed to basic and acidic residues. Positions 32–45 (QEAAQQQAEAQKQA) are enriched in low complexity.

This sequence belongs to the PDCD5 family.

The chain is DNA-binding protein rrnAC3180 from Haloarcula marismortui (strain ATCC 43049 / DSM 3752 / JCM 8966 / VKM B-1809) (Halobacterium marismortui).